The primary structure comprises 391 residues: Protein-glutamate methylesterase/protein-glutamine glutaminase (391 aa).

The region spanning 4-121 (KVLVVDDSSF…ARNNEDAIKL (118 aa)) is the Response regulatory domain. At Asp55 the chain carries 4-aspartylphosphate. In terms of domain architecture, CheB-type methylesterase spans 197–391 (SGKHYQLVAI…IRLKTEVGCG (195 aa)). Active-site residues include Ser209, His236, and Asp333.

It belongs to the CheB family. In terms of processing, phosphorylated by CheA. Phosphorylation of the N-terminal regulatory domain activates the methylesterase activity.

The protein resides in the cytoplasm. The enzyme catalyses [protein]-L-glutamate 5-O-methyl ester + H2O = L-glutamyl-[protein] + methanol + H(+). The catalysed reaction is L-glutaminyl-[protein] + H2O = L-glutamyl-[protein] + NH4(+). Its function is as follows. Involved in chemotaxis. Part of a chemotaxis signal transduction system that modulates chemotaxis in response to various stimuli. Catalyzes the demethylation of specific methylglutamate residues introduced into the chemoreceptors (methyl-accepting chemotaxis proteins or MCP) by CheR. Also mediates the irreversible deamidation of specific glutamine residues to glutamic acid. The chain is Protein-glutamate methylesterase/protein-glutamine glutaminase from Pseudoalteromonas translucida (strain TAC 125).